Consider the following 334-residue polypeptide: Cytochrome c551 peroxidase (334 aa).

The signal sequence occupies residues 1 to 26 (MIKRTLTVSLLSLSLGAMFASAGVMA). Residues Cys65, Cys68, His69, Cys209, Cys212, His213, His270, and Met284 each contribute to the heme c site. The segment at 315 to 334 (FKLPILPPSNNDTPRSQPYE) is disordered. Positions 322–334 (PSNNDTPRSQPYE) are enriched in polar residues.

In terms of processing, binds 2 heme c groups covalently per subunit.

The protein resides in the periplasm. It carries out the reaction 2 Fe(II)-[cytochrome c] + H2O2 + 2 H(+) = 2 Fe(III)-[cytochrome c] + 2 H2O. The sequence is that of Cytochrome c551 peroxidase (ccp) from Nitrosomonas europaea (strain ATCC 19718 / CIP 103999 / KCTC 2705 / NBRC 14298).